A 262-amino-acid chain; its full sequence is 2-aminoethylphosphonate dioxygenase (262 aa).

Residue Lys-108 coordinates 2-oxoglutarate. Fe cation-binding residues include His-118, Asp-120, and His-198.

This sequence belongs to the PhyH family. Fe(2+) is required as a cofactor.

It carries out the reaction (2-aminoethyl)phosphonate + 2-oxoglutarate + O2 = (1R)-(2-amino-1-hydroxyethyl)phosphonate + succinate + CO2. Activity is enhanced by ascorbate. Its function is as follows. Involved in the degradation of the organophosphonate 2-aminoethylphosphonic acid (2-AEP). Catalyzes the hydroxylation of 2-aminoethylphosphonic acid to yield (2-amino-1-hydroxyethyl)phosphonic acid. The sequence is that of 2-aminoethylphosphonate dioxygenase from Uncultured bacterium HF130_AEPn_1.